The primary structure comprises 189 residues: uncharacterized protein (189 aa).

Positions 1 to 23 are cleaved as a signal peptide; it reads MVPPKPALWALLLALLGTAPSRA. Asparagine 72 is a glycosylation site (N-linked (GlcNAc...) asparagine).

This is an uncharacterized protein from Homo sapiens (Human).